The sequence spans 334 residues: Phenylalanine--tRNA ligase alpha subunit (334 aa).

Glu249 lines the Mg(2+) pocket.

This sequence belongs to the class-II aminoacyl-tRNA synthetase family. Phe-tRNA synthetase alpha subunit type 1 subfamily. Tetramer of two alpha and two beta subunits. Requires Mg(2+) as cofactor.

The protein localises to the cytoplasm. It catalyses the reaction tRNA(Phe) + L-phenylalanine + ATP = L-phenylalanyl-tRNA(Phe) + AMP + diphosphate + H(+). The sequence is that of Phenylalanine--tRNA ligase alpha subunit from Desulfosudis oleivorans (strain DSM 6200 / JCM 39069 / Hxd3) (Desulfococcus oleovorans).